The following is a 99-amino-acid chain: Acylphosphatase-2 (99 aa).

An N-acetylserine modification is found at serine 2. Residues 9 to 99 (SVDYEVFGRV…LEYSNFSIRY (91 aa)) enclose the Acylphosphatase-like domain. Catalysis depends on residues arginine 24 and asparagine 42. Residue serine 93 is modified to Phosphoserine.

It belongs to the acylphosphatase family.

The catalysed reaction is an acyl phosphate + H2O = a carboxylate + phosphate + H(+). Functionally, its physiological role is not yet clear. The chain is Acylphosphatase-2 (ACYP2) from Homo sapiens (Human).